An 81-amino-acid polypeptide reads, in one-letter code: ATP synthase subunit c, chloroplastic (81 aa).

The next 2 helical transmembrane spans lie at 3-23 and 57-77; these read PIIS…ASIG and LAFM…LLFA.

The protein belongs to the ATPase C chain family. F-type ATPases have 2 components, F(1) - the catalytic core - and F(0) - the membrane proton channel. F(1) has five subunits: alpha(3), beta(3), gamma(1), delta(1), epsilon(1). F(0) has four main subunits: a(1), b(1), b'(1) and c(10-14). The alpha and beta chains form an alternating ring which encloses part of the gamma chain. F(1) is attached to F(0) by a central stalk formed by the gamma and epsilon chains, while a peripheral stalk is formed by the delta, b and b' chains.

The protein localises to the plastid. Its subcellular location is the chloroplast thylakoid membrane. In terms of biological role, f(1)F(0) ATP synthase produces ATP from ADP in the presence of a proton or sodium gradient. F-type ATPases consist of two structural domains, F(1) containing the extramembraneous catalytic core and F(0) containing the membrane proton channel, linked together by a central stalk and a peripheral stalk. During catalysis, ATP synthesis in the catalytic domain of F(1) is coupled via a rotary mechanism of the central stalk subunits to proton translocation. Key component of the F(0) channel; it plays a direct role in translocation across the membrane. A homomeric c-ring of between 10-14 subunits forms the central stalk rotor element with the F(1) delta and epsilon subunits. The sequence is that of ATP synthase subunit c, chloroplastic from Cicer arietinum (Chickpea).